Consider the following 402-residue polypeptide: Oligopeptide transport ATP-binding protein OppD (402 aa).

In terms of domain architecture, ABC transporter spans 22 to 309 (LDITDLHVNF…PLHPYTWALI (288 aa)). 58 to 65 (GESGSGKS) serves as a coordination point for ATP.

The protein belongs to the ABC transporter superfamily. The complex is composed of two ATP-binding proteins (OppD and OppF), two transmembrane proteins (OppB and OppC) and a solute-binding protein (OppA).

The protein resides in the cell membrane. The catalysed reaction is a [peptide](out) + ATP + H2O = a [peptide](in) + ADP + phosphate + H(+). Functionally, part of the ABC transporter complex OppABCDF involved in the uptake of oligopeptides. Probably responsible for energy coupling to the transport system. This chain is Oligopeptide transport ATP-binding protein OppD (oppD), found in Mycoplasma genitalium (strain ATCC 33530 / DSM 19775 / NCTC 10195 / G37) (Mycoplasmoides genitalium).